Consider the following 325-residue polypeptide: tRNA-dihydrouridine(16) synthase (325 aa).

FMN is bound by residues 12–14 and Gln-73; that span reads PMQ. Residue Cys-103 is the Proton donor of the active site. FMN is bound by residues Lys-144, 205 to 207, and 229 to 230; these read NGE and GR.

The protein belongs to the Dus family. DusC subfamily. FMN is required as a cofactor.

It catalyses the reaction 5,6-dihydrouridine(16) in tRNA + NADP(+) = uridine(16) in tRNA + NADPH + H(+). The catalysed reaction is 5,6-dihydrouridine(16) in tRNA + NAD(+) = uridine(16) in tRNA + NADH + H(+). Its function is as follows. Catalyzes the synthesis of 5,6-dihydrouridine (D), a modified base found in the D-loop of most tRNAs, via the reduction of the C5-C6 double bond in target uridines. Specifically modifies U16 in tRNAs. The polypeptide is tRNA-dihydrouridine(16) synthase (Haemophilus ducreyi (strain 35000HP / ATCC 700724)).